The sequence spans 287 residues: Putative S-adenosyl-L-methionine-dependent methyltransferase SACE_1742 (287 aa).

Residues aspartate 119 and 148-149 each bind S-adenosyl-L-methionine; that span reads DL.

Belongs to the UPF0677 family.

Functionally, exhibits S-adenosyl-L-methionine-dependent methyltransferase activity. The protein is Putative S-adenosyl-L-methionine-dependent methyltransferase SACE_1742 of Saccharopolyspora erythraea (strain ATCC 11635 / DSM 40517 / JCM 4748 / NBRC 13426 / NCIMB 8594 / NRRL 2338).